Consider the following 189-residue polypeptide: UPF0301 protein RP032 (189 aa).

This sequence belongs to the UPF0301 (AlgH) family.

This chain is UPF0301 protein RP032, found in Rickettsia prowazekii (strain Madrid E).